Reading from the N-terminus, the 142-residue chain is Transcription antitermination protein NusB (142 aa).

The protein belongs to the NusB family. As to quaternary structure, monomer or homodimer; in equilibrium, with a preference for the monomer. Dimerization may be employed to package NusB in an inactive form until recruitment into antitermination complexes.

Involved in transcription antitermination. Required for transcription of ribosomal RNA (rRNA) genes. Binds specifically to the boxA antiterminator sequence of the ribosomal RNA (rrn) operons. In Thermotoga maritima (strain ATCC 43589 / DSM 3109 / JCM 10099 / NBRC 100826 / MSB8), this protein is Transcription antitermination protein NusB.